The primary structure comprises 280 residues: Fructose-1,6-bisphosphatase/inositol-1-monophosphatase (280 aa).

Mg(2+) is bound by residues Glu-73, Asp-94, Leu-96, and Asp-97. Residues 97–99 (DGT), Arg-195, Val-200, and Arg-219 contribute to the substrate site. Asp-226 serves as a coordination point for Mg(2+).

It belongs to the inositol monophosphatase superfamily. FBPase class 4 family. Mg(2+) is required as a cofactor.

It catalyses the reaction beta-D-fructose 1,6-bisphosphate + H2O = beta-D-fructose 6-phosphate + phosphate. It carries out the reaction a myo-inositol phosphate + H2O = myo-inositol + phosphate. Its function is as follows. Phosphatase with broad specificity; it can dephosphorylate fructose 1,6-bisphosphate, and both D and L isomers of inositol-1-phosphate (I-1-P). The polypeptide is Fructose-1,6-bisphosphatase/inositol-1-monophosphatase (suhB) (Methanothermobacter thermautotrophicus (strain ATCC 29096 / DSM 1053 / JCM 10044 / NBRC 100330 / Delta H) (Methanobacterium thermoautotrophicum)).